The following is a 3013-amino-acid chain: Genome polyprotein (3013 aa).

Position 2 is an N-acetylserine; by host (Ser-2). The tract at residues 2-23 (STLPKPQKRNQRNTNRRPQDVK) is interaction with STAT1. The tract at residues 2 to 58 (STLPKPQKRNQRNTNRRPQDVKFPGGGQIVGGVYLLPRRGPRLGVRATRKTSERSQP) is interaction with EIF2AK2/PKR. The interaction with DDX3X stretch occupies residues 2–59 (STLPKPQKRNQRNTNRRPQDVKFPGGGQIVGGVYLLPRRGPRLGVRATRKTSERSQPR). The interval 2-75 (STLPKPQKRN…PKARRQTGRT (74 aa)) is disordered. Topologically, residues 2 to 168 (STLPKPQKRN…EDGINYATGN (167 aa)) are cytoplasmic. Short sequence motifs (nuclear localization signal) lie at residues 5–13 (PKPQKRNQR) and 38–43 (PRRGPR). Over residues 7 to 16 (PQKRNQRNTN) the composition is skewed to basic residues. The span at 32–47 (GGVYLLPRRGPRLGVR) shows a compositional bias: low complexity. Phosphoserine; by host is present on Ser-53. 2 short sequence motifs (nuclear localization signal) span residues 58 to 64 (PRGRRQP) and 66 to 71 (PKARRQ). A compositionally biased stretch (basic residues) spans 58 to 72 (PRGRRQPIPKARRQT). Ser-99 and Ser-116 each carry phosphoserine; by host. The interval 112–152 (PRRRSRNLGKVIDTLTCGFADLMGYIPVVGAPLGGVAAALA) is important for endoplasmic reticulum and mitochondrial localization. Positions 122-173 (VIDTLTCGFADLMGYIPVVGAPLGGVAAALAHGVRAVEDGINYATGNLPGCS) are interaction with APOA2. The segment at 164-167 (YATG) is important for lipid droplets localization. Residues 169-189 (LPGCSFSIFLLALLSCLTTPA) traverse the membrane as a helical segment. A propeptide spans 178 to 191 (LLALLSCLTTPASA) (ER anchor for the core protein, removed in mature form by host signal peptidase). Residues 190-358 (SAVHYANKSG…TGGHWGILAG (169 aa)) lie on the Lumenal side of the membrane. Asn-196, Asn-209, Asn-234, and Asn-250 each carry an N-linked (GlcNAc...) asparagine; by host glycan. Residues 265-296 (MVGAAAFCSAMYVGDLCGGIFLVGQLFSFNPR) are important for fusion. Asn-305 is a glycosylation site (N-linked (GlcNAc...) asparagine; by host). The chain crosses the membrane as a helical span at residues 359-379 (ILYYSMVANWAKVLCILFLFA). Over 380–723 (GVDATTRTTG…WEYVVLAFLL (344 aa)) the chain is Lumenal. Residues 385 to 412 (TRTTGAQAARATLGFTGLFQTGAKQNIH) are HVR1. N-linked (GlcNAc...) (high mannose) asparagine; by host glycosylation is found at Asn-417, Asn-423, and Asn-430. 4 disulfide bridges follow: Cys-429/Cys-553, Cys-452/Cys-459, Cys-487/Cys-495, and Cys-504/Cys-509. Asn-448 is a glycosylation site (N-linked (GlcNAc...) asparagine; by host). The interval 475 to 479 (ANVSG) is HVR2. An N-linked (GlcNAc...) asparagine; by host glycan is attached at Asn-476. Residues 481 to 494 (SEDRPYCWHYAPRP) form a CD81-binding 1 region. Residue Asn-533 is glycosylated (N-linked (GlcNAc...) asparagine; by host). The segment at 545-552 (PPAGAWYG) is CD81-binding 2. Asn-557 is a glycosylation site (N-linked (GlcNAc...) asparagine; by host). 4 disulfides stabilise this stretch: Cys-565–Cys-570, Cys-579–Cys-583, Cys-595–Cys-618, and Cys-605–Cys-642. Residues Asn-621 and Asn-643 are each glycosylated (N-linked (GlcNAc...) (high mannose) asparagine; by host). A disulfide bridge connects residues Cys-650 and Cys-675. Residues 658-669 (IEMSPLLFSTTE) are PKR/eIF2-alpha phosphorylation homology domain (PePHD). Residues 724–744 (LADARICACLWMVLLISQVEA) form a helical membrane-spanning segment. Residues 745–755 (ALENLIVLNAA) are Lumenal-facing. A helical transmembrane segment spans residues 756–776 (SAASSQGWIYCLVFICCAWYI). Over 777-780 (KGRV) the chain is Cytoplasmic. A helical membrane pass occupies residues 781 to 801 (VPGATYAILHLWPLLLLVLAL). At 802–811 (PQRAYAQDRE) the chain is on the lumenal side. Residues 812–832 (QGASIGVVVIAAITIFTLTPA) form a helical membrane-spanning segment. At 833–879 (YKTMLVHFLWWNQYFIARSEALIQQWVPSLRVRGGRDAVILLTCLLH) the chain is on the cytoplasmic side. A helical membrane pass occupies residues 880–900 (PSLGFDITKMLLALLGPLYLL). The Lumenal portion of the chain corresponds to 901–926 (QVSLLRVPYYVRAHALLRVCILVRRV). Residues 901–1024 (QVSLLRVPYY…DMKSMGWRLL (124 aa)) enclose the Peptidase C18 domain. Residues 902–1204 (VSLLRVPYYV…PVENMETTMR (303 aa)) are protease NS2-3. Cys-920 is lipidated: S-palmitoyl cysteine; by host. Residues 927–947 (AGGKYIQAALLKLGAWTGTYI) traverse the membrane as a helical segment. Residues 927-947 (AGGKYIQAALLKLGAWTGTYI) form an interaction with host SCPS1 region. The Cytoplasmic portion of the chain corresponds to 948-1655 (YDHLAPLSTW…CMAADLEVIT (708 aa)). Active-site for protease NS2 activity; shared with dimeric partner residues include His-950, Glu-970, and Cys-991. In terms of domain architecture, Peptidase S29 spans 1025 to 1206 (APITAYCQQT…ENMETTMRSP (182 aa)). Catalysis depends on charge relay system; for serine protease NS3 activity residues His-1081 and Asp-1105. Residues Cys-1121 and Cys-1123 each contribute to the Zn(2+) site. The active-site Charge relay system; for serine protease NS3 activity is the Ser-1163. 2 residues coordinate Zn(2+): Cys-1169 and His-1173. The 153-residue stretch at 1215–1367 (PAVPQTYQVG…PNITETALPS (153 aa)) folds into the Helicase ATP-binding domain. 1228 to 1235 (APTGSGKS) serves as a coordination point for ATP. 2 residues coordinate Mg(2+): Ser-1235 and Glu-1315. The DECH box signature appears at 1314–1317 (DECH). Residues 1374–1536 (YGKAIPLECI…ELTPSETTVR (163 aa)) form the Helicase C-terminal domain. The segment at 1484-1496 (QRRGRTGRGKPGV) is RNA-binding. A helical transmembrane segment spans residues 1656-1676 (STWVLAGGIVAALAAYCLTVG). The segment at 1677–1688 (SVVICGRIVTSG) is NS3-binding. Over 1677-1803 (SVVICGRIVT…ALTSPLSTST (127 aa)) the chain is Cytoplasmic. A helical transmembrane segment spans residues 1804–1824 (TLLLNILGGWVASQLAPPTAS). Residues 1825 to 1826 (TA) lie on the Lumenal side of the membrane. A helical transmembrane segment spans residues 1827 to 1847 (FVVSGLAGAAVGSIGLGKVII). A topological domain (cytoplasmic) is located at residue Asp-1848. The chain crosses the membrane as a helical span at residues 1849–1869 (ILAGYGAGVSGALVAFKIMSG). Residues 1870–1879 (EAPAVEDMVN) lie on the Lumenal side of the membrane. The chain crosses the membrane as a helical span at residues 1880 to 1900 (LLPALLSPGALVVGVVCAAVL). The Cytoplasmic portion of the chain corresponds to 1901–1970 (RRHVGPSEGA…WISGDWSAPC (70 aa)). Cys-1970 carries S-palmitoyl cysteine; by host lipidation. The stretch at 1971-2000 (SCSWLKDVWDWVCTVLSDFKTWLRAKLVPT) is an intramembrane region. The Cytoplasmic segment spans residues 2001 to 2992 (LPGIPFISCQ…FHSVSRARPR (992 aa)). Residues Cys-2009, Cys-2027, Cys-2029, and Cys-2050 each contribute to the Zn(2+) site. The segment at 2118-2206 (EFFTEVDGVR…ASSSASQLSA (89 aa)) is FKBP8-binding. The segment at 2118 to 2331 (EFFTEVDGVR…PVPPPRKKRV (214 aa)) is transcriptional activation. The tract at residues 2133-2137 (PPCRP) is interaction with non-structural protein 4A. The segment at 2187-2440 (RLARGSPPSL…ALITPCAAEE (254 aa)) is interaction with host SKP2. Phosphoserine; by host is present on residues Ser-2192, Ser-2195, Ser-2199, Ser-2202, Ser-2205, and Ser-2208. The interval 2208 to 2247 (SLKATCTTAGKHPDAELIEANLLWRQEVGGNITRVESENK) is ISDR. The interaction with EIF2AK2/PKR stretch occupies residues 2208–2273 (SLKATCTTAG…REISVGAECF (66 aa)). Positions 2247–2305 (KIIVLDSFDPLIAETDDREISVGAECFNPPRPKFPPALPVWARPDYNPPLLQPWKAPDY) are NS4B-binding. A V3 region spans residues 2298–2376 (QPWKAPDYEP…STLSSDMTPP (79 aa)). The tract at residues 2316-2411 (PPKGLPPVPP…PDLSSGSWST (96 aa)) is disordered. The SH3-binding signature appears at 2321-2324 (PPVP). The Nuclear localization signal motif lies at 2326–2334 (PRKKRVVQL). A compositionally biased stretch (polar residues) spans 2347–2373 (AQTSFPPSTATLSEDSGRETSTLSSDM). Positions 2375–2385 (PPREEADRASD) are enriched in basic and acidic residues. Ser-2464 is subject to Phosphoserine; by host. One can recognise a RdRp catalytic domain in the interval 2636 to 2754 (PMGFSYDTRC…ISESMGVAED (119 aa)). Residues Asp-2642, Asp-2740, and Asp-2741 each contribute to the Mg(2+) site. Residues 2993–3013 (NLLLCLLLLTVGVGIFLLPAR) traverse the membrane as a helical segment.

Belongs to the hepacivirus polyprotein family. As to quaternary structure, homooligomer. Interacts with E1 (via C-terminus). Interacts with the non-structural protein 5A. Interacts (via N-terminus) with host STAT1 (via SH2 domain); this interaction results in decreased STAT1 phosphorylation and ubiquitin-mediated proteasome-dependent STAT1 degradation, leading to decreased IFN-stimulated gene transcription. Interacts with host STAT3; this interaction constitutively activates STAT3. Interacts with host LTBR receptor. Interacts with host TNFRSF1A receptor and possibly induces apoptosis. Interacts with host HNRPK. Interacts with host YWHAE. Interacts with host UBE3A/E6AP. Interacts with host DDX3X. Interacts with host APOA2. Interacts with host RXRA protein. Interacts with host SP110 isoform 3/Sp110b; this interaction sequesters the transcriptional corepressor SP110 away from the nucleus. Interacts with host CREB3 nuclear transcription protein; this interaction triggers cell transformation. Interacts with host ACY3. Interacts with host C1QR1. Interacts with host RBM24; this interaction, which enhances the interaction of the mature core protein with 5'-UTR, may inhibit viral translation and favor replication. Interacts with host EIF2AK2/PKR; this interaction induces the autophosphorylation of EIF2AK2. Part of the viral assembly initiation complex composed of NS2, E1, E2, NS3, NS4A, NS5A and the mature core protein. Forms a heterodimer with envelope glycoprotein E2. Interacts with mature core protein. Interacts with protease NS2. The heterodimer E1/E2 interacts with host CLDN1; this interaction plays a role in viral entry into host cell. Interacts with host SPSB2 (via C-terminus). Part of the viral assembly initiation complex composed of NS2, E1, E2, NS3, NS4A, NS5A and the mature core protein. Interacts with host NEURL3; this interaction prevents E1 binding to glycoprotein E2. In terms of assembly, forms a heterodimer with envelope glycoprotein E1. Interacts with host CD81 and SCARB1 receptors; these interactions play a role in viral entry into host cell. Interacts with host EIF2AK2/PKR; this interaction inhibits EIF2AK2 and probably allows the virus to evade the innate immune response. Interacts with host CD209/DC-SIGN and CLEC4M/DC-SIGNR. Interact with host SPCS1; this interaction is essential for viral particle assembly. Interacts with protease NS2. The heterodimer E1/E2 interacts with host CLDN1; this interaction plays a role in viral entry into host cell. Part of the viral assembly initiation complex composed of NS2, E1, E2, NS3, NS4A, NS5A and the mature core protein. Interacts with host SLC3A2/4F2hc; the interaction may facilitate viral entry into host cell. Interacts with human PLSCR1. As to quaternary structure, homohexamer. Homoheptamer. Interacts with protease NS2. Homodimer. Interacts with host SPCS1; this interaction is essential for viral particle assembly. Interacts with envelope glycoprotein E1. Interacts with envelope glycoprotein E2. Interacts with viroporin p7. Interacts with serine protease/helicase NS3. Part of the replication complex composed of NS2, NS3, NS4A, NS4B, NS5A and the RNA-directed RNA polymerase embedded in an ER-derived membranous web. Part of the viral assembly initiation complex composed of NS2, E1, E2, NS3, NS4A, NS5A and the mature core protein. In terms of assembly, interacts with protease NS2. Interacts with non-structural protein 4A; this interaction stabilizes the folding of NS3 serine protease. NS3-NS4A interaction is essential for NS3 activation and allows membrane anchorage of the latter. NS3/NS4A complex also prevents phosphorylation of host IRF3, thus preventing the establishment of dsRNA induced antiviral state. Interacts with host MAVS; this interaction leads to the cleavage and inhibition of host MAVS. Interacts with host TICAM1; this interaction leads to the cleavage and inhibition of host TICAM1. Interacts with host TANK-binding kinase/TBK1; this interaction results in the inhibition of the association between TBK1 and IRF3, which leads to the inhibition of IRF3 activation. Interacts with host RBM24. Part of the replication complex composed of NS2, NS3, NS4A, NS4B, NS5A and the RNA-directed RNA polymerase embedded in an ER-derived membranous web. Part of the viral assembly initiation complex composed of NS2, E1, E2, NS3, NS4A, NS5A and the mature core protein. As to quaternary structure, interacts with NS3 serine protease; this interaction stabilizes the folding of NS3 serine protease. NS3-NS4A interaction is essential for NS3 activation and allows membrane anchorage of the latter. Interacts with non-structural protein 5A (via N-terminus). Part of the replication complex composed of NS2, NS3, NS4A, NS4B, NS5A and the RNA-directed RNA polymerase embedded in an ER-derived membranous web. Part of the viral assembly initiation complex composed of NS2, E1, E2, NS3, NS4A, NS5A and the mature core protein. Homomultimer. Interacts with non-structural protein NS5A. Interacts with host PLA2G4C; this interaction likely initiates the recruitment of replication complexes to lipid droplets. Interacts with host STING; this interaction disrupts the interaction between STING and TBK1 thereby suppressing the interferon signaling. Part of the replication complex composed of NS2, NS3, NS4A, NS4B, NS5A and the RNA-directed RNA polymerase embedded in an ER-derived membranous web. In terms of assembly, monomer. Homodimer; dimerization is required for RNA-binding. Interacts with the mature core protein. Interacts (via N-terminus) with non-structural protein 4A. Interacts with non-structural protein 4B. Interacts (via region D2) with RNA-directed RNA polymerase. Part of the viral assembly initiation complex composed of NS2, E1, E2, NS3, NS4A, NS5A and the mature core protein. Part of the replication complex composed of NS2, NS3, NS4A, NS4B, NS5A and the RNA-directed RNA polymerase embedded in an ER-derived membranous web. Interacts with host GRB2. Interacts with host BIN1. Interacts with host PIK3R1. Interacts with host SRCAP. Interacts with host FKBP8. Interacts (via C-terminus) with host VAPB (via MSP domain). Interacts with host EIF2AK2/PKR; this interaction leads to disruption of EIF2AK2 dimerization by NS5A and probably allows the virus to evade the innate immune response. Interacts (via N-terminus) with host PACSIN2 (via N-terminus); this interaction attenuates protein kinase C alpha-mediated phosphorylation of PACSIN2 by disrupting the interaction between PACSIN2 and PRKCA. Interacts (via N-terminus) with host SRC kinase (via SH2 domain). Interacts with most Src-family kinases. Interacts with host IFI27 and SKP2; promotes the ubiquitin-mediated proteasomal degradation of NS5A. Interacts with host GPS2. Interacts with host TNFRSF21; this interaction allows the modulation by the virus of JNK, p38 MAPK, STAT3, and Akt signaling pathways in a DR6-dependent manner. Interacts (via N-terminus) with host CIDEB (via N-terminus); this interaction seems to regulate the association of HCV particles with APOE. Interacts with host CHKA/Choline Kinase-alpha; CHKA bridges host PI4KA and NS5A and potentiates NS5A-stimulated PI4KA activity, which then facilitates the targeting of the ternary complex to the ER for viral replication. Interacts with host SPSB2 (via C-terminus); this interaction targets NS5A for ubiquitination and degradation. Interacts with host RAB18; this interaction may promote the association of NS5A and other replicase components with lipid droplets. Interacts (via region D2) with host PPIA/CYPA; the interaction stimulates RNA-binding ability of NS5A and is dependent on the peptidyl-prolyl cis-trans isomerase activity of PPIA/CYPA. Interacts with host TRIM14; this interaction induces the degradation of NS5A. As to quaternary structure, homooligomer. Interacts with non-structural protein 5A. Interacts with host VAPB. Interacts with host PRK2/PKN2. Interacts with host HNRNPA1 and SEPT6; these interactions facilitate viral replication. Part of the replication complex composed of NS2, NS3, NS4A, NS4B, NS5A and the RNA-directed RNA polymerase. Zn(2+) serves as cofactor. It depends on Mg(2+) as a cofactor. Specific enzymatic cleavages in vivo yield mature proteins. The structural proteins, core, E1, E2 and p7 are produced by proteolytic processing by host signal peptidases. The core protein precursor is synthesized as a 23 kDa, which is retained in the ER membrane through the hydrophobic signal peptide. Cleavage by the signal peptidase releases the 21 kDa mature core protein. The cleavage of the core protein precursor occurs between aminoacids 176 and 188 but the exact cleavage site is not known. Some degraded forms of the core protein appear as well during the course of infection. The other proteins (p7, NS2, NS3, NS4A, NS4B, NS5A and NS5B) are cleaved by the viral proteases. Autoprocessing between NS2 and NS3 is mediated by the NS2 cysteine protease catalytic domain and regulated by the NS3 N-terminal domain. Post-translationally, phosphorylated by host PKC and PKA. In terms of processing, ubiquitinated; mediated by UBE3A and leading to core protein subsequent proteasomal degradation. Highly N-glycosylated. Post-translationally, palmitoylation is required for NS2/3 autoprocessing and E2 recruitment to membranes. In terms of processing, palmitoylated. This modification may play a role in its polymerization or in protein-protein interactions. Phosphorylated on serines in a basal form termed p56. p58 is a hyperphosphorylated form of p56. p56 and p58 coexist in the cell in roughly equivalent amounts. Hyperphosphorylation is dependent on the presence of NS4A. Host CSNK1A1/CKI-alpha or RPS6KB1 kinases may be responsible for NS5A phosphorylation. Post-translationally, tyrosine phosphorylation is essential for the interaction with host SRC. In terms of processing, the N-terminus is phosphorylated by host PRK2/PKN2.

Its subcellular location is the host endoplasmic reticulum membrane. It localises to the host mitochondrion membrane. It is found in the virion. The protein localises to the host cytoplasm. The protein resides in the host nucleus. Its subcellular location is the host lipid droplet. It localises to the virion membrane. It is found in the host mitochondrion. The protein localises to the host cell membrane. The protein resides in the host perinuclear region. The catalysed reaction is Hydrolysis of four peptide bonds in the viral precursor polyprotein, commonly with Asp or Glu in the P6 position, Cys or Thr in P1 and Ser or Ala in P1'.. It catalyses the reaction a ribonucleoside 5'-triphosphate + H2O = a ribonucleoside 5'-diphosphate + phosphate + H(+). It carries out the reaction ATP + H2O = ADP + phosphate + H(+). The enzyme catalyses RNA(n) + a ribonucleoside 5'-triphosphate = RNA(n+1) + diphosphate. Inhibited by the antiviral drug hexamethylene amiloride. Inhibition by amantadine appears to be genotype-dependent. Also inhibited by long-alkyl-chain iminosugar derivatives. Its activity is regulated as follows. Activity is up-regulated by PRK2/PKN2-mediated phosphorylation. Functionally, packages viral RNA to form a viral nucleocapsid, and promotes virion budding. Participates in the viral particle production as a result of its interaction with the non-structural protein 5A. Binds RNA and may function as a RNA chaperone to induce the RNA structural rearrangements taking place during virus replication. Modulates viral translation initiation by interacting with viral IRES and 40S ribosomal subunit. Affects various cell signaling pathways, host immunity and lipid metabolism. Prevents the establishment of cellular antiviral state by blocking the interferon-alpha/beta (IFN-alpha/beta) and IFN-gamma signaling pathways and by blocking the formation of phosphorylated STAT1 and promoting ubiquitin-mediated proteasome-dependent degradation of STAT1. Activates STAT3 leading to cellular transformation. Regulates the activity of cellular genes, including c-myc and c-fos. May repress the promoter of p53, and sequester CREB3 and SP110 isoform 3/Sp110b in the cytoplasm. Represses cell cycle negative regulating factor CDKN1A, thereby interrupting an important check point of normal cell cycle regulation. Targets transcription factors involved in the regulation of inflammatory responses and in the immune response: suppresses TNF-induced NF-kappa-B activation, and activates AP-1. Binds to dendritic cells (DCs) via C1QR1, resulting in down-regulation of T-lymphocytes proliferation. Alters lipid metabolism by interacting with hepatocellular proteins involved in lipid accumulation and storage. Induces up-regulation of FAS promoter activity, and thereby contributes to the increased triglyceride accumulation in hepatocytes (steatosis). In terms of biological role, forms a heterodimer with envelope glycoprotein E2, which mediates virus attachment to the host cell, virion internalization through clathrin-dependent endocytosis and fusion with host membrane. Fusion with the host cell is most likely mediated by both E1 and E2, through conformational rearrangements of the heterodimer required for fusion rather than a classical class II fusion mechanism. E1/E2 heterodimer binds host apolipoproteins such as APOB and ApoE thereby forming a lipo-viro-particle (LVP). APOE associated to the LVP allows the initial virus attachment to cell surface receptors such as the heparan sulfate proteoglycans (HSPGs), syndecan-1 (SDC1), syndecan-1 (SDC2), the low-density lipoprotein receptor (LDLR) and scavenger receptor class B type I (SCARB1). The cholesterol transfer activity of SCARB1 allows E2 exposure and binding of E2 to SCARB1 and the tetraspanin CD81. E1/E2 heterodimer binding on CD81 activates the epithelial growth factor receptor (EGFR) signaling pathway. Diffusion of the complex E1-E2-EGFR-SCARB1-CD81 to the cell lateral membrane allows further interaction with Claudin 1 (CLDN1) and occludin (OCLN) to finally trigger HCV entry. Forms a heterodimer with envelope glycoprotein E1, which mediates virus attachment to the host cell, virion internalization through clathrin-dependent endocytosis and fusion with host membrane. Fusion with the host cell is most likely mediated by both E1 and E2, through conformational rearrangements of the heterodimer required for fusion rather than a classical class II fusion mechanism. The interaction between envelope glycoprotein E2 and host apolipoprotein E/APOE allows the proper assembly, maturation and infectivity of the viral particles. This interaction is probably promoted via the up-regulation of cellular autophagy by the virus. E1/E2 heterodimer binds host apolipoproteins such as APOB and APOE thereby forming a lipo-viro-particle (LVP). APOE associated to the LVP allows the initial virus attachment to cell surface receptors such as the heparan sulfate proteoglycans (HSPGs), syndecan-1 (SDC1), syndecan-1 (SDC2), the low-density lipoprotein receptor (LDLR) and scavenger receptor class B type I (SCARB1). The cholesterol transfer activity of SCARB1 allows E2 exposure and binding of E2 to SCARB1 and the tetraspanin CD81. E1/E2 heterodimer binding on CD81 activates the epithelial growth factor receptor (EGFR) signaling pathway. Diffusion of the complex E1-E2-EGFR-SCARB1-CD81 to the cell lateral membrane allows further interaction with Claudin 1 (CLDN1) and occludin (OCLN) to finally trigger HCV entry. Inhibits host EIF2AK2/PKR activation, preventing the establishment of an antiviral state. Viral ligand for CD209/DC-SIGN and CLEC4M/DC-SIGNR, which are respectively found on dendritic cells (DCs), and on liver sinusoidal endothelial cells and macrophage-like cells of lymph node sinuses. These interactions allow the capture of circulating HCV particles by these cells and subsequent facilitated transmission to permissive cells such as hepatocytes and lymphocyte subpopulations. The interaction between E2 and host amino acid transporter complex formed by SLC3A2 and SLC7A5/LAT1 may facilitate viral entry into host cell. Its function is as follows. Ion channel protein that acts as a viroporin and plays an essential role in the assembly, envelopment and secretion of viral particles. Regulates the host cell secretory pathway, which induces the intracellular retention of viral glycoproteins and favors assembly of viral particles. Creates a pore in acidic organelles and releases Ca(2+) and H(+) in the cytoplasm of infected cells, leading to a productive viral infection. High levels of cytoplasmic Ca(2+) may trigger membrane trafficking and transport of viral ER-associated proteins to viroplasms, sites of viral genome replication. This ionic imbalance induces the assembly of the inflammasome complex, which triggers the maturation of pro-IL-1beta into IL-1beta through the action of caspase-1. Targets also host mitochondria and induces mitochondrial depolarization. In addition of its role as a viroporin, acts as a lipid raft adhesion factor. Functionally, cysteine protease required for the proteolytic auto-cleavage between the non-structural proteins NS2 and NS3. The N-terminus of NS3 is required for the function of NS2 protease (active region NS2-3). Promotes the initiation of viral particle assembly by mediating the interaction between structural and non-structural proteins. In terms of biological role, displays three enzymatic activities: serine protease with a chymotrypsin-like fold, NTPase and RNA helicase. NS3 serine protease, in association with NS4A, is responsible for the cleavages of NS3-NS4A, NS4A-NS4B, NS4B-NS5A and NS5A-NS5B. The NS3/NS4A complex prevents phosphorylation of host IRF3, thus preventing the establishment of dsRNA induced antiviral state. The NS3/NS4A complex induces host amino acid transporter component SLC3A2, thus contributing to HCV propagation. NS3 RNA helicase binds to RNA and unwinds both dsDNA and dsRNA in the 3' to 5' direction, and likely resolves RNA complicated stable secondary structures in the template strand. Binds a single ATP and catalyzes the unzipping of a single base pair of dsRNA. Inhibits host antiviral proteins TBK1 and IRF3 thereby preventing the establishment of an antiviral state. Cleaves host MAVS/CARDIF thereby preventing the establishment of an antiviral state. Cleaves host TICAM1/TRIF, thereby disrupting TLR3 signaling and preventing the establishment of an antiviral state. Peptide cofactor which forms a non-covalent complex with the N-terminal of NS3 serine protease. The NS3/NS4A complex prevents phosphorylation of host IRF3, thus preventing the establishment of dsRNA induced antiviral state. The NS3/NS4A complex induces host amino acid transporter component SLC3A2, thus contributing to HCV propagation. Its function is as follows. Induces a specific membrane alteration that serves as a scaffold for the virus replication complex. This membrane alteration gives rise to the so-called ER-derived membranous web that contains the replication complex. NS4B self-interaction contributes to its function in membranous web formation. Promotes host TRIF protein degradation in a CASP8-dependent manner thereby inhibiting host TLR3-mediated interferon signaling. Disrupts the interaction between STING and TBK1 contributing to the inhibition of interferon signaling. Functionally, phosphorylated protein that is indispensable for viral replication and assembly. Both hypo- and hyperphosphorylated states are required for the viral life cycle. The hyperphosphorylated form of NS5A is an inhibitor of viral replication. Involved in RNA-binding and especially in binding to the viral genome. Zinc is essential for RNA-binding. Participates in the viral particle production as a result of its interaction with the mature viral core protein. Its interaction with host VAPB may target the viral replication complex to vesicles. Down-regulates viral IRES translation initiation. Mediates interferon resistance, presumably by interacting with and inhibiting host EIF2AK2/PKR. Prevents BIN1-induced apoptosis. Acts as a transcriptional activator of some host genes important for viral replication when localized in the nucleus. Via the interaction with host PACSIN2, modulates lipid droplet formation in order to promote virion assembly. Modulates TNFRSF21/DR6 signaling pathway for viral propagation. In terms of biological role, RNA-dependent RNA polymerase that performs primer-template recognition and RNA synthesis during viral replication. Initiates RNA transcription/replication at a flavin adenine dinucleotide (FAD), resulting in a 5'- FAD cap on viral RNAs. In this way, recognition of viral 5' RNA by host pattern recognition receptors can be bypassed, thereby evading activation of antiviral pathways. This chain is Genome polyprotein, found in Hepatitis C virus genotype 6d (isolate VN235) (HCV).